The following is a 424-amino-acid chain: UDP-N-acetylglucosamine 1-carboxyvinyltransferase (424 aa).

22 to 23 (KN) lines the phosphoenolpyruvate pocket. Arg98 is a UDP-N-acetyl-alpha-D-glucosamine binding site. Cys122 acts as the Proton donor in catalysis. Position 122 is a 2-(S-cysteinyl)pyruvic acid O-phosphothioketal (Cys122). Residues 127–131 (RPVDQ), Asp312, and Ile334 each bind UDP-N-acetyl-alpha-D-glucosamine.

The protein belongs to the EPSP synthase family. MurA subfamily.

It localises to the cytoplasm. The catalysed reaction is phosphoenolpyruvate + UDP-N-acetyl-alpha-D-glucosamine = UDP-N-acetyl-3-O-(1-carboxyvinyl)-alpha-D-glucosamine + phosphate. The protein operates within cell wall biogenesis; peptidoglycan biosynthesis. Functionally, cell wall formation. Adds enolpyruvyl to UDP-N-acetylglucosamine. This chain is UDP-N-acetylglucosamine 1-carboxyvinyltransferase, found in Xanthomonas oryzae pv. oryzae (strain MAFF 311018).